We begin with the raw amino-acid sequence, 453 residues long: Midnolin (453 aa).

One can recognise a Ubiquitin-like domain in the interval Met20–Gly94. Disordered regions lie at residues His185–Val219, Pro231–Lys256, Ser330–Asn374, and Gln390–Glu434. Composition is skewed to low complexity over residues Ser188 to Ser204 and Ser239 to Ser252. Polar residues predominate over residues Ser330–Cys362. Residues Ser365–Asn374 are compositionally biased toward basic and acidic residues. The segment covering Gln390–Arg399 has biased composition (basic residues). A compositionally biased stretch (low complexity) spans Arg415–Ser428.

The protein localises to the nucleus. It localises to the cytoplasm. Its subcellular location is the cytosol. It is found in the nucleolus. Functionally, facilitates ubiquitin-independent proteasomal degradation of polycomb protein CBX4. Plays a role in inhibiting the activity of glucokinase GCK and both glucose-induced and basal insulin secretion. In Xenopus tropicalis (Western clawed frog), this protein is Midnolin (midn).